Consider the following 457-residue polypeptide: Cysteine desulfurase (457 aa).

Residues alanine 127, threonine 128, glutamine 235, serine 255, and histidine 257 each coordinate pyridoxal 5'-phosphate. Lysine 258 bears the N6-(pyridoxal phosphate)lysine mark. Threonine 295 lines the pyridoxal 5'-phosphate pocket. The active-site Cysteine persulfide intermediate is cysteine 381. Residue cysteine 381 participates in [2Fe-2S] cluster binding. Position 381 (cysteine 381) interacts with Zn(2+). Cysteine 381 carries the post-translational modification Cysteine persulfide.

Belongs to the class-V pyridoxal-phosphate-dependent aminotransferase family. NifS/IscS subfamily. Homodimer. Component of the mitochondrial core iron-sulfur cluster (ISC) complex composed of NFS1, LYRM4, NDUFAB1, ISCU, FXN, and FDX2; this complex is a heterohexamer containing two copies of each monomer. Component of cyteine desulfurase complex composed of NFS1, LYRM4 and NDUFAB1; this complex contributes to the activation of cysteine desulfurase activity and NFS1 stabilization. Interacts (homodimer form) with ISCU (D-state); each monomer interacts with the C-terminal regions of each NFS1 monomer. Interacts with HSPA9. Interacts (via homodimer form) with FDX2. Interacts (via homodimer form) with FXN. Interacts with LYRM4. Component of a complex composed of FXN, NFS1, LYRM4 and ISCU. In terms of assembly, monomer. Homodimer. Oligomer. Interacts with ISCU. Component of the cysteine desulfurase complex composed of NFS1 and LYRM4; this complex contributes to the activation of cysteine desulfurase activity. Interacts with MOCS3. The cofactor is pyridoxal 5'-phosphate. In terms of processing, N-gluconoylated. Cysteine persulfide intermediate is reduced by thiol-containing molecules like glutathione and L-cysteine. Persulfide reduction is a rate-limiting step of cysteine desulfurase catalytic cycle.

It is found in the mitochondrion. The protein resides in the cytoplasm. Its subcellular location is the nucleus. The protein localises to the cytoskeleton. It localises to the microtubule organizing center. It is found in the centrosome. The enzyme catalyses (sulfur carrier)-H + L-cysteine = (sulfur carrier)-SH + L-alanine. It catalyses the reaction L-cysteinyl-[cysteine desulfurase] + L-cysteine = S-sulfanyl-L-cysteinyl-[cysteine desulfurase] + L-alanine. Its activity is regulated as follows. Active only in complex with LYRM4. Functionally, cysteine desulfurase, of the core iron-sulfur cluster (ISC) assembly complex, that catalyzes the desulfuration of L-cysteine to L-alanine, as component of the cysteine desulfurase complex leading to the formation of a cysteine persulfide intermediate at the active site cysteine residue and participates in the [2Fe-2S] clusters assembly on the scaffolding protein ISCU. The persulfide is then transferred on the flexible Cys loop from the catalytic site of NFS1 to the surface of NFS1. After the NFS1-linked persulfide sulfur is transferred to one of the conserved Cys residues of the scaffold, a reaction assisted by FXN. The core iron-sulfur cluster (ISC) assembly complex is involved in the de novo synthesis of a [2Fe-2S] cluster, the first step of the mitochondrial iron-sulfur protein biogenesis. This process is initiated by the cysteine desulfurase complex (NFS1:LYRM4:NDUFAB1) that produces persulfide which is delivered on the scaffold protein ISCU in a FXN-dependent manner. Then this complex is stabilized by FDX2 which provides reducing equivalents to accomplish the [2Fe-2S] cluster assembly. Finally, the [2Fe-2S] cluster is transferred from ISCU to chaperone proteins, including HSCB, HSPA9 and GLRX5. In terms of biological role, may catalyze the desulfuration of L-cysteine to L-alanine as component of the cysteine desulfurase complex (NFS1:LYRM4), leading to the formation of a cysteine persulfide intermediate. Acts as a sulfur donor for MOCS3 by transferring the sulfur of the cysteine persulfide intermediate on MOCS3. The protein is Cysteine desulfurase of Pongo abelii (Sumatran orangutan).